Here is a 980-residue protein sequence, read N- to C-terminus: Probable outer membrane protein PmpH (980 aa).

The N-terminal stretch at 1-24 (MPFSLRSTSFCFLACLCSYSYGLA) is a signal peptide. The Autotransporter domain maps to 661–980 (GELVPNSLWV…FVSLGLNRIF (320 aa)).

It belongs to the PMP outer membrane protein family.

It localises to the secreted. It is found in the cell wall. Its subcellular location is the cell outer membrane. In Chlamydia muridarum (strain MoPn / Nigg), this protein is Probable outer membrane protein PmpH (pmpH).